Reading from the N-terminus, the 227-residue chain is A-type potassium channel modulatory protein KCNIP1 (227 aa).

The 57-residue stretch at 38–94 folds into the EF-hand 1; degenerate domain; the sequence is LEMTMVCHRPEGLEQLEAQTNFTKRELQVLYRGFKNECPSGVVNEETFKQIYAQFFP. EF-hand domains follow at residues 97-132, 133-168, and 181-216; these read DAST…LLRG, TVHE…IYDM, and TPRQ…DDNI. Ca(2+) is bound by residues Asp-146, Asn-148, Asp-150, Tyr-152, Glu-157, Asp-194, Asn-196, Asp-198, and Glu-205. Residues 214–227 are interaction with KCND2; it reads DNIMRSLQLFQNVM.

The protein belongs to the recoverin family. As to quaternary structure, component of heteromultimeric potassium channels. Identified in potassium channel complexes containing KCND1, KCND2, KCND3, KCNIP1, KCNIP2, KCNIP3, KCNIP4, DPP6 and DPP10. Part of a heterooctamer composed of the tetrameric channel and four KCNIP1 chains. Probably part of a complex consisting of KCNIP1, KCNIP2 isoform 3 and KCND2. Self-associates to form homodimers and homotetramers. Interacts with KCNIP2 isoform 3 in a calcium-dependent manner. Interacts with KCND2; this interaction mediates the capture of both the N- and C-terminus of KCND2, thus preventing KCND2 N-type inactivation and modulates the channel gating kinetics. Interacts with KCND3; each KCNIP1 monomer interacts with two adjacent KCND3 subunits, through both the N-terminal inactivation ball of a KCND3 subunit and a C-terminal helix from the adjacent KCND3 subunit, clamping them together; this interaction stabilizes the tetrameric form and modulates the channel gating kinetics namely channel activation and inactivation kinetics and rate of recovery from inactivation. As to expression, detected in hippocampus and in the molecular layer of the dentate gyrus (at protein level). Isoform 1 and isoform 2 are predominantly expressed at equal levels in brain. Colocalizes with KCND3 in inhibitory interneurons in cortex and hippocampus and in striatal interneurons.

Its subcellular location is the cell membrane. It localises to the cytoplasm. It is found in the cell projection. The protein localises to the dendrite. In terms of biological role, regulatory subunit of Kv4/D (Shal)-type voltage-gated rapidly inactivating A-type potassium channels. Regulates channel density, inactivation kinetics and rate of recovery from inactivation in a calcium-dependent and isoform-specific manner. Modulates KCND2/Kv4.2 currents. In vitro, modulates KCND1/Kv4.1 currents. Increases the presence of KCND2 at the cell surface. This is A-type potassium channel modulatory protein KCNIP1 from Rattus norvegicus (Rat).